A 264-amino-acid polypeptide reads, in one-letter code: MVKDRMVELLQEHFELNLYEARAYVALVGFGVLTPAELASVSEVPAPRTYDVLRSLEKKGFAISQPGKVNKYRPVHPENILEKFIEEWQERVKEELEAKKKAKEELIELMKPLIETEIPKYGVERVWVVRGIRNATLKTKEMFEEVKEKILLADDGYIAINLENDLIKAIDNGAKAKIIVSKSLLKRLEGSKIMEYAKKGKLELRALDKFELPMLICDDEVFFALEDMAARYFNYETQVWIKDFRVRDLFEAKFNEYWEKAEKV.

Residues 81–113 are a coiled coil; it reads LEKFIEEWQERVKEELEAKKKAKEELIELMKPL.

The protein belongs to the transcriptional regulator TrmB family.

The protein resides in the cytoplasm. Its subcellular location is the chromosome. Functionally, an abundant chromosomal protein that seems to be involved in both genome architecture and transcription repression. Incubation with DNA in vitro gives fibrous structures 14.2 +/- 2.1 nm in thickness (naked DNA is 1.83 +/- 0.37 nm); does not significantly compact DNA. Binds to both coding and non-coding regions; binding within gene promoters correlates with decreased transcript levels, while binding within coding regions does not. The chain is DNA-binding HTH-type transcriptional repressor TrmBL2 from Thermococcus kodakarensis (strain ATCC BAA-918 / JCM 12380 / KOD1) (Pyrococcus kodakaraensis (strain KOD1)).